The sequence spans 265 residues: Mlc titration factor A (265 aa).

H111, H148, H152, and E211 together coordinate Zn(2+).

It belongs to the MtfA family. Interacts with Mlc. It depends on Zn(2+) as a cofactor.

The protein localises to the cytoplasm. In terms of biological role, involved in the modulation of the activity of the glucose-phosphotransferase system (glucose-PTS). Interacts with the transcriptional repressor Mlc, preventing its interaction with DNA and leading to the modulation of expression of genes regulated by Mlc, including ptsG, which encodes the PTS system glucose-specific EIICB component. Functionally, shows zinc-dependent metallopeptidase activity. This Escherichia coli O7:K1 (strain IAI39 / ExPEC) protein is Mlc titration factor A.